Reading from the N-terminus, the 278-residue chain is Large ribosomal subunit protein uL2 (278 aa).

Disordered stretches follow at residues 1–53 (MAIR…TTRH) and 224–278 (VVMN…NKKR). Residues 23 to 33 (EITRSTPEKSL) are compositionally biased toward basic and acidic residues. Residues 258–267 (RNPNRYSNNM) show a composition bias toward polar residues. Basic residues predominate over residues 269–278 (VRRRRPNKKR).

It belongs to the universal ribosomal protein uL2 family. As to quaternary structure, part of the 50S ribosomal subunit. Forms a bridge to the 30S subunit in the 70S ribosome.

In terms of biological role, one of the primary rRNA binding proteins. Required for association of the 30S and 50S subunits to form the 70S ribosome, for tRNA binding and peptide bond formation. It has been suggested to have peptidyltransferase activity; this is somewhat controversial. Makes several contacts with the 16S rRNA in the 70S ribosome. The protein is Large ribosomal subunit protein uL2 of Corynebacterium aurimucosum (strain ATCC 700975 / DSM 44827 / CIP 107346 / CN-1) (Corynebacterium nigricans).